A 333-amino-acid chain; its full sequence is Holliday junction branch migration complex subunit RuvB (333 aa).

Residues 1–182 (MDERLLSGES…FGVLSRLEYY (182 aa)) are large ATPase domain (RuvB-L). ATP-binding positions include Leu-21, Arg-22, Gly-63, Lys-66, Thr-67, Thr-68, 129-131 (EDF), Arg-172, Tyr-182, and Arg-219. Thr-67 provides a ligand contact to Mg(2+). Residues 183–253 (TVDQLSAIVE…ITQMALELLQ (71 aa)) are small ATPAse domain (RuvB-S). Residues 256 to 333 (KLGLDHIDHK…EHFGMEMPKV (78 aa)) form a head domain (RuvB-H) region. Arg-311 and Arg-316 together coordinate DNA.

It belongs to the RuvB family. As to quaternary structure, homohexamer. Forms an RuvA(8)-RuvB(12)-Holliday junction (HJ) complex. HJ DNA is sandwiched between 2 RuvA tetramers; dsDNA enters through RuvA and exits via RuvB. An RuvB hexamer assembles on each DNA strand where it exits the tetramer. Each RuvB hexamer is contacted by two RuvA subunits (via domain III) on 2 adjacent RuvB subunits; this complex drives branch migration. In the full resolvosome a probable DNA-RuvA(4)-RuvB(12)-RuvC(2) complex forms which resolves the HJ.

The protein localises to the cytoplasm. It catalyses the reaction ATP + H2O = ADP + phosphate + H(+). Functionally, the RuvA-RuvB-RuvC complex processes Holliday junction (HJ) DNA during genetic recombination and DNA repair, while the RuvA-RuvB complex plays an important role in the rescue of blocked DNA replication forks via replication fork reversal (RFR). RuvA specifically binds to HJ cruciform DNA, conferring on it an open structure. The RuvB hexamer acts as an ATP-dependent pump, pulling dsDNA into and through the RuvAB complex. RuvB forms 2 homohexamers on either side of HJ DNA bound by 1 or 2 RuvA tetramers; 4 subunits per hexamer contact DNA at a time. Coordinated motions by a converter formed by DNA-disengaged RuvB subunits stimulates ATP hydrolysis and nucleotide exchange. Immobilization of the converter enables RuvB to convert the ATP-contained energy into a lever motion, pulling 2 nucleotides of DNA out of the RuvA tetramer per ATP hydrolyzed, thus driving DNA branch migration. The RuvB motors rotate together with the DNA substrate, which together with the progressing nucleotide cycle form the mechanistic basis for DNA recombination by continuous HJ branch migration. Branch migration allows RuvC to scan DNA until it finds its consensus sequence, where it cleaves and resolves cruciform DNA. The sequence is that of Holliday junction branch migration complex subunit RuvB from Bacillus anthracis (strain A0248).